The primary structure comprises 144 residues: Large ribosomal subunit protein uL15 (144 aa).

The disordered stretch occupies residues 1-58 (MQLNDLRSAPGARREKLRPGRGIGSGLGKTGGRGHKGQTSRSGGKIAPGFEGGQQPLH). The span at 21-31 (RGIGSGLGKTG) shows a compositional bias: gly residues.

This sequence belongs to the universal ribosomal protein uL15 family. As to quaternary structure, part of the 50S ribosomal subunit.

Binds to the 23S rRNA. In Azotobacter vinelandii (strain DJ / ATCC BAA-1303), this protein is Large ribosomal subunit protein uL15.